We begin with the raw amino-acid sequence, 358 residues long: Glutamate 5-kinase (358 aa).

Residue Lys9 coordinates ATP. Positions 49, 136, and 148 each coordinate substrate. ATP contacts are provided by residues 168 to 169 and 210 to 216; these read TD and TGGMTTK. Residues 275–353 enclose the PUA domain; sequence DAAVEVDAGA…RAEGVLIHRN (79 aa).

This sequence belongs to the glutamate 5-kinase family.

It localises to the cytoplasm. It catalyses the reaction L-glutamate + ATP = L-glutamyl 5-phosphate + ADP. It participates in amino-acid biosynthesis; L-proline biosynthesis; L-glutamate 5-semialdehyde from L-glutamate: step 1/2. Its function is as follows. Catalyzes the transfer of a phosphate group to glutamate to form L-glutamate 5-phosphate. The polypeptide is Glutamate 5-kinase (Streptococcus suis (strain 05ZYH33)).